Consider the following 796-residue polypeptide: Ent-copalyl diphosphate synthase 4 (796 aa).

Residues 1-23 (MSSSSIVTSLLRPTTAADGVLPR) constitute a chloroplast transit peptide. Lys240 is a substrate binding site. Mg(2+) contacts are provided by Asp371 and Asp373. The DXDD motif signature appears at 371–374 (DVDD). A substrate-binding site is contributed by Lys457.

The protein belongs to the terpene synthase family. Tpsc subfamily. Mg(2+) serves as cofactor. Highly expressed in leaves, and, at low levels, in stems, but barely in roots and flowers.

It localises to the plastid. It is found in the chloroplast. The catalysed reaction is (2E,6E,10E)-geranylgeranyl diphosphate = ent-copalyl diphosphate. It participates in secondary metabolite biosynthesis; terpenoid biosynthesis. Functionally, involved in the biosynthesis of ent-kaurene diterpenoids natural products such as oridonin, miltiradiene, eriocalyxin B and nezukol, known to exhibit antitumor, anti-inflammatory and antibacterial activities. Catalyzes the conversion of (2E,6E,10E)-geranylgeranyl diphosphate (GGPP) to ent-copalyl diphosphate (ent-CPP). The polypeptide is Ent-copalyl diphosphate synthase 4 (Isodon rubescens (Rabdosia rubescens)).